We begin with the raw amino-acid sequence, 222 residues long: Tegument protein UL26 (222 aa).

Belongs to the herpesviridae US22 family. Interacts with UL25. Interacts with ISGylation machinery components ISG15, UBA7 and HERC5; these interactions inhibit global protein ISGylation. In terms of processing, ISGylated; ISGylation regulates UL26 stability and inhibits its activities to suppress NF-kappa-B signaling.

Its subcellular location is the virion tegument. It is found in the host nucleus. Plays a role in the inhibition of host NF-kappa-B. This inhibition affects both the canonical and the non-canonical pathways. Blocks the induction of host IKK phosphorylation. May also influence the normal phosphorylation state of several tegument proteins including pp28 in virions. Also suppresses virus-induced ISGylation independent of its own ISGylation. The polypeptide is Tegument protein UL26 (UL26) (Homo sapiens (Human)).